The primary structure comprises 231 residues: Lipid A acyltransferase PagP (231 aa).

An N-terminal signal peptide occupies residues 1 to 23 (MNKLTVRNFIVGLLIVFSLNSFS). A compositionally biased stretch (low complexity) spans 24–43 (SPPSISNSSSNSIDENSPIN). Residues 24 to 59 (SPPSISNSSSNSIDENSPINTFKISPDNQTSKKSDL) are disordered. Catalysis depends on residues histidine 100, aspartate 145, and serine 146.

Belongs to the lipid A palmitoyltransferase family. Homodimer.

It localises to the cell outer membrane. It catalyses the reaction a lipid A + a 1,2-diacyl-sn-glycero-3-phosphocholine = a hepta-acyl lipid A + a 2-acyl-sn-glycero-3-phosphocholine. The catalysed reaction is a lipid IVA + a 1,2-diacyl-sn-glycero-3-phosphocholine = a lipid IVB + a 2-acyl-sn-glycero-3-phosphocholine. The enzyme catalyses a lipid IIA + a 1,2-diacyl-sn-glycero-3-phosphocholine = a lipid IIB + a 2-acyl-sn-glycero-3-phosphocholine. In terms of biological role, transfers a fatty acid residue from the sn-1 position of a phospholipid to the N-linked hydroxyfatty acid chain on the proximal unit of lipid A or its precursors. The protein is Lipid A acyltransferase PagP of Legionella longbeachae serogroup 1 (strain NSW150).